A 238-amino-acid chain; its full sequence is Orotidine 5'-phosphate decarboxylase (238 aa).

Substrate is bound by residues D13, K35, 62–71, T121, R182, Q191, G211, and R212; that span reads DLKFHDIPNT. K64 serves as the catalytic Proton donor.

Belongs to the OMP decarboxylase family. Type 1 subfamily. Homodimer.

The catalysed reaction is orotidine 5'-phosphate + H(+) = UMP + CO2. The protein operates within pyrimidine metabolism; UMP biosynthesis via de novo pathway; UMP from orotate: step 2/2. Functionally, catalyzes the decarboxylation of orotidine 5'-monophosphate (OMP) to uridine 5'-monophosphate (UMP). The protein is Orotidine 5'-phosphate decarboxylase of Saccharophagus degradans (strain 2-40 / ATCC 43961 / DSM 17024).